Reading from the N-terminus, the 140-residue chain is Relaxin-3 (140 aa).

Residues 1-23 form the signal peptide; sequence MATRGLLLASWALLGALVLQAEA. Cystine bridges form between C33-C127, C45-C140, and C126-C131. The propeptide at 53 to 116 is connecting peptide; the sequence is ADILAHDPLG…GSPGVVRGSR (64 aa).

Belongs to the insulin family. Heterodimer of a B chain and an A chain linked by two disulfide bonds. As to expression, highly abundant expression is detected in neurons within the ventomedial dorsal tegmental nucleus and the laterally central gray alpha of the pons. Also detected at much lower levels within the hippocampus.

The protein resides in the secreted. Its function is as follows. May play a role in neuropeptide signaling processes. Ligand for LGR7, relaxin-3 receptor-1 and relaxin-3 receptor-2. In Rattus norvegicus (Rat), this protein is Relaxin-3 (Rln3).